A 214-amino-acid polypeptide reads, in one-letter code: UPF0758 protein (214 aa).

The MPN domain occupies 92-214 (VLSSWQALLD…ELSFRAEGLL (123 aa)). Histidine 163, histidine 165, and aspartate 176 together coordinate Zn(2+). A JAMM motif motif is present at residues 163-176 (HNHPSGDPTPSQAD).

The protein belongs to the UPF0758 family.

The protein is UPF0758 protein of Rhodobacter capsulatus (Rhodopseudomonas capsulata).